Reading from the N-terminus, the 195-residue chain is Large ribosomal subunit protein eL15 (195 aa).

The tract at residues 174–195 (GHGRLGSAKSRPSIRANGRLRR) is disordered.

Belongs to the eukaryotic ribosomal protein eL15 family.

The polypeptide is Large ribosomal subunit protein eL15 (Picrophilus torridus (strain ATCC 700027 / DSM 9790 / JCM 10055 / NBRC 100828 / KAW 2/3)).